Here is a 103-residue protein sequence, read N- to C-terminus: Sec-independent protein translocase protein TatA (103 aa).

The helical transmembrane segment at 1-21 threads the bilayer; it reads MGNIFSPTHLIIILLLILLLF. Positions 48-103 are disordered; that stretch reads EESIEDKVEMADTSQVINEESQQSQPLSVKRAAIRRKASSDSKGGKASIAKKQRVK. A compositionally biased stretch (polar residues) spans 59–74; sequence DTSQVINEESQQSQPL.

Belongs to the TatA/E family. In terms of assembly, the Tat system comprises two distinct complexes: a TatABC complex, containing multiple copies of TatA, TatB and TatC subunits, and a separate TatA complex, containing only TatA subunits. Substrates initially bind to the TatABC complex, which probably triggers association of the separate TatA complex to form the active translocon.

It is found in the cell inner membrane. In terms of biological role, part of the twin-arginine translocation (Tat) system that transports large folded proteins containing a characteristic twin-arginine motif in their signal peptide across membranes. TatA could form the protein-conducting channel of the Tat system. This is Sec-independent protein translocase protein TatA from Bartonella tribocorum (strain CIP 105476 / IBS 506).